The chain runs to 946 residues: Nonribosomal peptide synthetase pngA (946 aa).

An adenylation (A) domain region spans residues alanine 32 to valine 450. A Carrier domain is found at glutamine 580–alanine 659. The residue at position 618 (serine 618) is an O-(pantetheine 4'-phosphoryl)serine. Residues proline 681 to phenylalanine 933 are thioesterase (TE) domain.

It belongs to the NRP synthetase family.

The enzyme catalyses 2 3-phenylpyruvate + H(+) = phenguignardate + H2O. In terms of biological role, nonribosomal peptide synthetase that mediates the biosynthesis of phenguignardic acid. PngA alone is sufficient for phenguignardic acid synthesis. PngA first activates phenylpyruvic acid (PPA) through its A domain to AMP-PPA. The PPA unit is then loaded to the T domain and eventually transferred to the TE domain. Another PPA unit is then loaded onto the T domain. The TE domain likely promotes the enolate formation on the attached unit, followed by a nucleophilic attack on the carbonyl to yield an ether linkage between the two units. Finally, the TE domain probably catalyzes a similar reaction to give the cyclized dioxolanone core and releases phenguignardic acid. The polypeptide is Nonribosomal peptide synthetase pngA (Aspergillus terreus (strain NIH 2624 / FGSC A1156)).